The following is a 596-amino-acid chain: Transketolase-like protein 1 (596 aa).

Substrate is bound at residue His46. Residues Ser49 and 94–96 contribute to the thiamine diphosphate site; that span reads GWL. Asp126 is a binding site for Mg(2+). Thiamine diphosphate contacts are provided by Gly127 and Asn156. Mg(2+)-binding residues include Asn156 and Leu158. Lys218 and His232 together coordinate thiamine diphosphate. Positions 232, 292, and 319 each coordinate substrate. Positions 340 and 366 each coordinate thiamine diphosphate. Glu340 (proton donor) is an active-site residue. The substrate site is built by His390 and Asp398. Residue Gln402 participates in thiamine diphosphate binding. Arg448 serves as a coordination point for substrate.

It belongs to the transketolase family. Homodimer. It depends on Mg(2+) as a cofactor. Requires Ca(2+) as cofactor. Mn(2+) serves as cofactor. Co(2+) is required as a cofactor. The cofactor is thiamine diphosphate.

The protein resides in the cytoplasm. It carries out the reaction D-sedoheptulose 7-phosphate + D-glyceraldehyde 3-phosphate = aldehydo-D-ribose 5-phosphate + D-xylulose 5-phosphate. Catalyzes the transfer of a two-carbon ketol group from a ketose donor to an aldose acceptor, via a covalent intermediate with the cofactor thiamine pyrophosphate. The sequence is that of Transketolase-like protein 1 (TKTL1) from Macaca fascicularis (Crab-eating macaque).